The following is a 476-amino-acid chain: Protein transport protein Sec61 subunit alpha isoform B (476 aa).

Topologically, residues 2 to 33 (GIKFLEVIKPFCAVLPEIQKPERKIQFREKVL) are cytoplasmic. A helical transmembrane segment spans residues 34–53 (WTAITLFIFLVCCQIPLFGI). At 54 to 76 (MSSDSADPFYWMRVILASNRGTL) the chain is on the lumenal side. The helical transmembrane segment at 77 to 96 (MELGISPIVTSGLIMQLLAG) threads the bilayer. At 97–117 (AKIIEVGDTPKDRALFNGAQK) the chain is on the cytoplasmic side. The helical transmembrane segment at 118-138 (LFGMIITIGQAIVYVMTGMYG) threads the bilayer. The Lumenal segment spans residues 139–144 (DPSDMG). Residues 145-165 (AGICLLIIIQLFVAGLIVLLL) traverse the membrane as a helical segment. Over 166 to 172 (DELLQKG) the chain is Cytoplasmic. Residues 173 to 193 (YGLGSGISLFIATNICETIVW) form a helical membrane-spanning segment. The Lumenal portion of the chain corresponds to 194 to 240 (KAFSPTTVNTGRGTEFEGAIIALFHLLATRTDKVRALREAFYRQNLP). The chain crosses the membrane as a helical span at residues 241–261 (NLMNLLATVFVFGVVIYFQGF). Topologically, residues 262-288 (RVDLPIKSARYRGQYNTYPIKLFYTSN) are cytoplasmic. The chain crosses the membrane as a helical span at residues 289 to 309 (IPIILQSALVSNLYVISQMLS). The Lumenal segment spans residues 310-354 (TRFSGNFLVNLLGTWSDTSSGGPARAYPVGGLCYYFSPPESFGSV). A helical transmembrane segment spans residues 355–375 (LDDPIHAAIYICFMLGSCAFF). Residues 376–420 (SKTWIEVSGSSAKDVAKQLKEQQMVMRGHRETSMVHELNRYIPTA) lie on the Cytoplasmic side of the membrane. Residues 421 to 441 (AAFGGLCIGGLSVMADFLGAI) traverse the membrane as a helical segment. Residues 442–445 (GSGT) lie on the Lumenal side of the membrane. The chain crosses the membrane as a helical span at residues 446–462 (GILLAVTIIYQYFEIFV). The Cytoplasmic portion of the chain corresponds to 463-476 (KEQSEMGSMGALLF).

This sequence belongs to the SecY/SEC61-alpha family. The SEC61 channel-forming translocon complex consists of channel-forming core components SEC61A1, SEC61B and SEC61G and different auxiliary components such as SEC62 and SEC63.

The protein resides in the endoplasmic reticulum membrane. Its function is as follows. Component of SEC61 channel-forming translocon complex that mediates transport of signal peptide-containing precursor polypeptides across the endoplasmic reticulum (ER). Forms a ribosome receptor and a gated pore in the ER membrane, both functions required for cotranslational translocation of nascent polypeptides. The polypeptide is Protein transport protein Sec61 subunit alpha isoform B (sec61ab) (Oncorhynchus mykiss (Rainbow trout)).